Here is a 534-residue protein sequence, read N- to C-terminus: Bifunctional purine biosynthesis protein PurH (534 aa).

Positions 6 to 151 constitute an MGS-like domain; it reads TRLPVRRALI…KNHKDVAIVV (146 aa).

The protein belongs to the PurH family.

The catalysed reaction is (6R)-10-formyltetrahydrofolate + 5-amino-1-(5-phospho-beta-D-ribosyl)imidazole-4-carboxamide = 5-formamido-1-(5-phospho-D-ribosyl)imidazole-4-carboxamide + (6S)-5,6,7,8-tetrahydrofolate. It carries out the reaction IMP + H2O = 5-formamido-1-(5-phospho-D-ribosyl)imidazole-4-carboxamide. Its pathway is purine metabolism; IMP biosynthesis via de novo pathway; 5-formamido-1-(5-phospho-D-ribosyl)imidazole-4-carboxamide from 5-amino-1-(5-phospho-D-ribosyl)imidazole-4-carboxamide (10-formyl THF route): step 1/1. The protein operates within purine metabolism; IMP biosynthesis via de novo pathway; IMP from 5-formamido-1-(5-phospho-D-ribosyl)imidazole-4-carboxamide: step 1/1. This is Bifunctional purine biosynthesis protein PurH from Stutzerimonas stutzeri (strain A1501) (Pseudomonas stutzeri).